The following is a 190-amino-acid chain: CASP-like protein 1E2 (190 aa).

Over residues 1–12 (MENEGKNNMNGM) the composition is skewed to low complexity. The disordered stretch occupies residues 1-24 (MENEGKNNMNGMEMEKGKRESRSR). Residues 1-28 (MENEGKNNMNGMEMEKGKRESRSRKGVE) lie on the Cytoplasmic side of the membrane. Residues 13–24 (EMEKGKRESRSR) show a composition bias toward basic and acidic residues. A helical membrane pass occupies residues 29–49 (LTMRVLALVLTMAAATVLGVA). Residues 50 to 83 (KQTKVVSIKLIPALPPLDITTTAKASYLSAFVYN) lie on the Extracellular side of the membrane. Residues 84–104 (ISANAIACGYTAISIAILMIS) traverse the membrane as a helical segment. The Cytoplasmic segment spans residues 105–111 (RGRRSKK). Residues 112 to 132 (LLMAVLLGDLVMVALLFSGTG) form a helical membrane-spanning segment. Residues 133–163 (AASAIGLMGLQGNKHVMWNKVCGVFGKFCHR) lie on the Extracellular side of the membrane. Residues 164–184 (AAPSLPLTFLAAVVFMFLVVL) traverse the membrane as a helical segment. The Cytoplasmic segment spans residues 185 to 190 (DAIKLP).

The protein belongs to the Casparian strip membrane proteins (CASP) family. As to quaternary structure, homodimer and heterodimers.

It is found in the cell membrane. This chain is CASP-like protein 1E2, found in Arabidopsis lyrata subsp. lyrata (Lyre-leaved rock-cress).